We begin with the raw amino-acid sequence, 356 residues long: uncharacterized protein (356 aa).

This is an uncharacterized protein from Methanocaldococcus jannaschii (strain ATCC 43067 / DSM 2661 / JAL-1 / JCM 10045 / NBRC 100440) (Methanococcus jannaschii).